A 428-amino-acid polypeptide reads, in one-letter code: Kynureninase (428 aa).

Pyridoxal 5'-phosphate is bound by residues T104, T105, 132–135 (FPSD), D213, H216, and Y238. The residue at position 239 (K239) is an N6-(pyridoxal phosphate)lysine. Pyridoxal 5'-phosphate contacts are provided by W267 and T295.

Belongs to the kynureninase family. Homodimer. Requires pyridoxal 5'-phosphate as cofactor.

It carries out the reaction L-kynurenine + H2O = anthranilate + L-alanine + H(+). The catalysed reaction is 3-hydroxy-L-kynurenine + H2O = 3-hydroxyanthranilate + L-alanine + H(+). The protein operates within amino-acid degradation; L-kynurenine degradation; L-alanine and anthranilate from L-kynurenine: step 1/1. It participates in cofactor biosynthesis; NAD(+) biosynthesis; quinolinate from L-kynurenine: step 2/3. Catalyzes the cleavage of L-kynurenine (L-Kyn) and L-3-hydroxykynurenine (L-3OHKyn) into anthranilic acid (AA) and 3-hydroxyanthranilic acid (3-OHAA), respectively. This Bacillus cereus (strain ZK / E33L) protein is Kynureninase.